We begin with the raw amino-acid sequence, 149 residues long: MQIWVDADACPSVIKEVLFRAAERRQITVTLVANQSVRVPPSPFIKSIRVESGFDVADNEIVKRVSKGELVITADIPLADEVIAKGALALNPRGELYTAENVKARLNMRDFMETLRASGIQSGGPAPLSQADRQAFANQLDRWLARLPK.

This sequence belongs to the UPF0178 family.

This chain is UPF0178 protein Sama_3557, found in Shewanella amazonensis (strain ATCC BAA-1098 / SB2B).